The following is a 229-amino-acid chain: NAD-dependent protein deacylase (229 aa).

The 227-residue stretch at 1-227 folds into the Deacetylase sirtuin-type domain; the sequence is MKNLVILSGA…QDLMPKLIEM (227 aa). 9 to 28 provides a ligand contact to NAD(+); sequence GAGISAESGIKTFRDADGLW. Residues Tyr53 and Arg56 each contribute to the substrate site. NAD(+) is bound at residue 86-89; sequence QNVD. Residue His104 is the Proton acceptor of the active site. NAD(+) is bound at residue 169–171; it reads GTS.

The protein belongs to the sirtuin family. Class III subfamily.

Its subcellular location is the cytoplasm. The catalysed reaction is N(6)-acetyl-L-lysyl-[protein] + NAD(+) + H2O = 2''-O-acetyl-ADP-D-ribose + nicotinamide + L-lysyl-[protein]. The enzyme catalyses N(6)-succinyl-L-lysyl-[protein] + NAD(+) + H2O = 2''-O-succinyl-ADP-D-ribose + nicotinamide + L-lysyl-[protein]. Functionally, NAD-dependent lysine deacetylase and desuccinylase that specifically removes acetyl and succinyl groups on target proteins. Modulates the activities of several proteins which are inactive in their acylated form. The sequence is that of NAD-dependent protein deacylase from Helicobacter pylori (strain ATCC 700392 / 26695) (Campylobacter pylori).